Reading from the N-terminus, the 88-residue chain is Putative septation protein SpoVG (88 aa).

The protein belongs to the SpoVG family.

Functionally, could be involved in septation. The protein is Putative septation protein SpoVG of Caldicellulosiruptor bescii (strain ATCC BAA-1888 / DSM 6725 / KCTC 15123 / Z-1320) (Anaerocellum thermophilum).